A 348-amino-acid polypeptide reads, in one-letter code: NADH-quinone oxidoreductase subunit H (348 aa).

A run of 8 helical transmembrane segments spans residues 10 to 30 (LPFL…LVLV), 82 to 102 (GVFL…WAVI), 115 to 135 (VGLL…IMGG), 161 to 181 (IGFV…TTIV), 199 to 219 (FLDW…ISAL), 251 to 271 (LFFL…TILF), 287 to 307 (IPGV…FAIV), and 322 to 342 (LGWK…AAFL).

Belongs to the complex I subunit 1 family. As to quaternary structure, NDH-1 is composed of 14 different subunits. Subunits NuoA, H, J, K, L, M, N constitute the membrane sector of the complex.

Its subcellular location is the cell inner membrane. It catalyses the reaction a quinone + NADH + 5 H(+)(in) = a quinol + NAD(+) + 4 H(+)(out). Functionally, NDH-1 shuttles electrons from NADH, via FMN and iron-sulfur (Fe-S) centers, to quinones in the respiratory chain. The immediate electron acceptor for the enzyme in this species is believed to be ubiquinone. Couples the redox reaction to proton translocation (for every two electrons transferred, four hydrogen ions are translocated across the cytoplasmic membrane), and thus conserves the redox energy in a proton gradient. This subunit may bind ubiquinone. This chain is NADH-quinone oxidoreductase subunit H, found in Bartonella tribocorum (strain CIP 105476 / IBS 506).